Reading from the N-terminus, the 257-residue chain is HTH-type transcriptional activator mta (257 aa).

In terms of domain architecture, HTH merR-type spans 2 to 71; it reads KYQVKQVAEI…LDEIKEMLDH (70 aa). Residues 5–24 constitute a DNA-binding region (H-T-H motif); it reads VKQVAEISGVSIRTLHHYDN. The interval 71–74 is hinge; it reads HPNF. Residues 76–104 are essential for dimerization; it reads RKAALQSQKEILMKKKQRMDEMIQTIDRT. A coiled-coil region spans residues 76-107; that stretch reads RKAALQSQKEILMKKKQRMDEMIQTIDRTLLS.

As to quaternary structure, homodimer.

The protein resides in the cytoplasm. Functionally, global transcriptional regulator that activates transcription of bmr and blt by binding directly to their promoter. Also stimulates the expression of the mta gene itself, ydfK and ymfE. The polypeptide is HTH-type transcriptional activator mta (mta) (Bacillus subtilis (strain 168)).